The following is a 356-amino-acid chain: Histidinol-phosphate aminotransferase (356 aa).

N6-(pyridoxal phosphate)lysine is present on Lys-214.

Belongs to the class-II pyridoxal-phosphate-dependent aminotransferase family. Histidinol-phosphate aminotransferase subfamily. In terms of assembly, homodimer. It depends on pyridoxal 5'-phosphate as a cofactor.

The enzyme catalyses L-histidinol phosphate + 2-oxoglutarate = 3-(imidazol-4-yl)-2-oxopropyl phosphate + L-glutamate. It participates in amino-acid biosynthesis; L-histidine biosynthesis; L-histidine from 5-phospho-alpha-D-ribose 1-diphosphate: step 7/9. This is Histidinol-phosphate aminotransferase from Escherichia coli O8 (strain IAI1).